Consider the following 181-residue polypeptide: Ribosome maturation factor RimM (181 aa).

Residues 103–181 (EGDYYWSQLE…EMVVDWDPEF (79 aa)) form the PRC barrel domain.

Belongs to the RimM family. In terms of assembly, binds ribosomal protein uS19.

It is found in the cytoplasm. Its function is as follows. An accessory protein needed during the final step in the assembly of 30S ribosomal subunit, possibly for assembly of the head region. Essential for efficient processing of 16S rRNA. May be needed both before and after RbfA during the maturation of 16S rRNA. It has affinity for free ribosomal 30S subunits but not for 70S ribosomes. This chain is Ribosome maturation factor RimM, found in Marinomonas sp. (strain MWYL1).